The primary structure comprises 37 residues: Large ribosomal subunit protein bL36 (37 aa).

It belongs to the bacterial ribosomal protein bL36 family.

The sequence is that of Large ribosomal subunit protein bL36 from Nitrosococcus oceani (strain ATCC 19707 / BCRC 17464 / JCM 30415 / NCIMB 11848 / C-107).